The following is a 633-amino-acid chain: Probable methyltransferase PMT17 (633 aa).

Residues 1–18 (MAKENSGHHHQTEARRKK) are Cytoplasmic-facing. A helical; Signal-anchor for type II membrane protein membrane pass occupies residues 19–39 (LTLILGVSGLCILFYVLGAWQ). Over 40 to 633 (ANTVPSSISK…NNNNNNNNNN (594 aa)) the chain is Lumenal. The segment at 50 to 71 (LGCETQSNPSSSSSSSSSSESA) is disordered. A compositionally biased stretch (low complexity) spans 59–70 (SSSSSSSSSSES). An N-linked (GlcNAc...) asparagine glycan is attached at Asn87.

This sequence belongs to the methyltransferase superfamily.

Its subcellular location is the endoplasmic reticulum membrane. The polypeptide is Probable methyltransferase PMT17 (Arabidopsis thaliana (Mouse-ear cress)).